A 382-amino-acid chain; its full sequence is Elongation factor Tu (382 aa).

Residues 1–7 (HVDHGKT), 62–66 (DCPGH), and 117–120 (NKVD) contribute to the GTP site. The tr-type G domain occupies 1–190 (HVDHGKTTLT…AVDEYIPTPQ (190 aa)). Position 7 (T7) interacts with Mg(2+).

It belongs to the TRAFAC class translation factor GTPase superfamily. Classic translation factor GTPase family. EF-Tu/EF-1A subfamily. In terms of assembly, monomer.

It localises to the cytoplasm. It carries out the reaction GTP + H2O = GDP + phosphate + H(+). Its function is as follows. GTP hydrolase that promotes the GTP-dependent binding of aminoacyl-tRNA to the A-site of ribosomes during protein biosynthesis. The protein is Elongation factor Tu of Chloroflexus aurantiacus.